The chain runs to 76 residues: Sec-independent protein translocase protein TatA (76 aa).

Residues 1–21 (MGGLSIWHWLIVLLIVALVFG) form a helical membrane-spanning segment. The segment at 40-76 (KDGMKEGETPADAQQLPRSGAVDVNAKETTRSDSNKA) is disordered. Residues 64 to 76 (NAKETTRSDSNKA) are compositionally biased toward basic and acidic residues.

Belongs to the TatA/E family. As to quaternary structure, the Tat system comprises two distinct complexes: a TatABC complex, containing multiple copies of TatA, TatB and TatC subunits, and a separate TatA complex, containing only TatA subunits. Substrates initially bind to the TatABC complex, which probably triggers association of the separate TatA complex to form the active translocon.

It is found in the cell inner membrane. In terms of biological role, part of the twin-arginine translocation (Tat) system that transports large folded proteins containing a characteristic twin-arginine motif in their signal peptide across membranes. TatA could form the protein-conducting channel of the Tat system. This chain is Sec-independent protein translocase protein TatA, found in Burkholderia cenocepacia (strain HI2424).